The sequence spans 130 residues: Small ribosomal subunit protein uS8 (130 aa).

The protein belongs to the universal ribosomal protein uS8 family. As to quaternary structure, part of the 30S ribosomal subunit.

Functionally, one of the primary rRNA binding proteins, it binds directly to 16S rRNA central domain where it helps coordinate assembly of the platform of the 30S subunit. This chain is Small ribosomal subunit protein uS8, found in Methanothermobacter thermautotrophicus (strain ATCC 29096 / DSM 1053 / JCM 10044 / NBRC 100330 / Delta H) (Methanobacterium thermoautotrophicum).